The sequence spans 334 residues: Sulfhydrogenase 2 subunit beta (334 aa).

4Fe-4S ferredoxin-type domains lie at 220–250 (KVWK…VCDT) and 294–328 (CKNY…VLDE). Residues Cys-229, Cys-232, Cys-235, Cys-239, Cys-306, Cys-309, Cys-312, and Cys-316 each coordinate [4Fe-4S] cluster.

Dimer of heterotetramer of alpha, beta, gamma and delta subunits. The nickel-containing alpha and delta subunits constitute the hydrogenase activity. The beta and gamma subunits (flavin-containing dimer) constitute the sulfur reductase activity. Requires [4Fe-4S] cluster as cofactor.

Its subcellular location is the cytoplasm. It catalyses the reaction n sulfur + H2 = (n-1) sulfur + hydrogen sulfide + H(+). Its function is as follows. Part of a bifunctional enzyme complex that functions as a hydrogen-evolving hydrogenase with sulfur-reducing activity. May play a role in hydrogen cycling during fermentative growth. Activity exhibited with NAD in addition to NADPH. The beta and gamma subunits form the sulfur-reducing component that catalyzes the cytoplasmic production of hydrogen sulfide in the presence of elemental sulfur. The sequence is that of Sulfhydrogenase 2 subunit beta from Pyrococcus furiosus (strain ATCC 43587 / DSM 3638 / JCM 8422 / Vc1).